The sequence spans 265 residues: Molybdenum-pterin-binding protein MopA (265 aa).

Mop domains are found at residues 126-192 and 198-264; these read RTSN…MLAA and RISA…ILAM.

It belongs to the ModE family.

The sequence is that of Molybdenum-pterin-binding protein MopA (mopA) from Rhodobacter capsulatus (Rhodopseudomonas capsulata).